Here is a 432-residue protein sequence, read N- to C-terminus: UDP-glucose 6-dehydrogenase (432 aa).

NAD(+) is bound by residues 2–19, Val11, Asp30, Lys35, Thr121, and Glu152; that span reads NITF…GIIM. Substrate contacts are provided by residues 148-152, Lys202, Asn206, 247-251, and Gly255; these read EFLRE and FLNAG. The Nucleophile role is filled by Cys258. Lys261 is a binding site for NAD(+). Lys319 is a substrate binding site. Arg326 provides a ligand contact to NAD(+).

This sequence belongs to the UDP-glucose/GDP-mannose dehydrogenase family.

The catalysed reaction is UDP-alpha-D-glucose + 2 NAD(+) + H2O = UDP-alpha-D-glucuronate + 2 NADH + 3 H(+). It functions in the pathway nucleotide-sugar biosynthesis; UDP-alpha-D-glucuronate biosynthesis; UDP-alpha-D-glucuronate from UDP-alpha-D-glucose: step 1/1. The chain is UDP-glucose 6-dehydrogenase (udg) from Rickettsia conorii (strain ATCC VR-613 / Malish 7).